Consider the following 221-residue polypeptide: Large ribosomal subunit protein uL3 (221 aa).

Positions glycine 123–glycine 156 are disordered.

Belongs to the universal ribosomal protein uL3 family. In terms of assembly, part of the 50S ribosomal subunit. Forms a cluster with proteins L14 and L19.

One of the primary rRNA binding proteins, it binds directly near the 3'-end of the 23S rRNA, where it nucleates assembly of the 50S subunit. This is Large ribosomal subunit protein uL3 from Aster yellows witches'-broom phytoplasma (strain AYWB).